The chain runs to 517 residues: Aldehyde dehydrogenase, mitochondrial (517 aa).

Residues 1-17 (MLRAAARFGPRLGRRLL) constitute a mitochondrion transit peptide. Positions 9–24 (GPRLGRRLLSAAATQA) match the SIFI-degron motif. N6-acetyllysine occurs at positions 52, 73, 78, and 159. 262-267 (GSTEIG) is an NAD(+) binding site. Glu285 acts as the Proton acceptor in catalysis. Catalysis depends on Cys319, which acts as the Nucleophile. N6-acetyllysine is present on residues Lys368, Lys383, Lys426, Lys428, and Lys451.

It belongs to the aldehyde dehydrogenase family. In terms of assembly, homotetramer. In response to mitochondrial stress, the precursor protein is ubiquitinated by the SIFI complex in the cytoplasm before mitochondrial import, leading to its degradation. Within the SIFI complex, UBR4 initiates ubiquitin chain that are further elongated or branched by KCMF1.

It is found in the mitochondrion matrix. It carries out the reaction an aldehyde + NAD(+) + H2O = a carboxylate + NADH + 2 H(+). Its pathway is alcohol metabolism; ethanol degradation; acetate from ethanol: step 2/2. Required for clearance of cellular formaldehyde, a cytotoxic and carcinogenic metabolite that induces DNA damage. This is Aldehyde dehydrogenase, mitochondrial (ALDH2) from Homo sapiens (Human).